The sequence spans 154 residues: 6,7-dimethyl-8-ribityllumazine synthase (154 aa).

Residues 22–23 (FN), 56–58 (AFE), and 80–82 (TVI) contribute to the 5-amino-6-(D-ribitylamino)uracil site. 85-86 (AT) is a binding site for (2S)-2-hydroxy-3-oxobutyl phosphate. His88 acts as the Proton donor in catalysis. Phe113 is a 5-amino-6-(D-ribitylamino)uracil binding site. Arg127 is a binding site for (2S)-2-hydroxy-3-oxobutyl phosphate.

This sequence belongs to the DMRL synthase family. Forms an icosahedral capsid composed of 60 subunits, arranged as a dodecamer of pentamers. Can interact with riboflavin synthase, forming a lumazine synthase/riboflavin synthase complex, also designated as 'heavy riboflavin synthase complex', which consists of a trimer of riboflavin synthase enclosed within the icosahedral structure composed of 60 subunits of 6,7-dimethyl-8-ribityllumazine synthase.

The catalysed reaction is (2S)-2-hydroxy-3-oxobutyl phosphate + 5-amino-6-(D-ribitylamino)uracil = 6,7-dimethyl-8-(1-D-ribityl)lumazine + phosphate + 2 H2O + H(+). It functions in the pathway cofactor biosynthesis; riboflavin biosynthesis; riboflavin from 2-hydroxy-3-oxobutyl phosphate and 5-amino-6-(D-ribitylamino)uracil: step 1/2. Its function is as follows. Catalyzes the formation of 6,7-dimethyl-8-ribityllumazine by condensation of 5-amino-6-(D-ribitylamino)uracil with 3,4-dihydroxy-2-butanone 4-phosphate. This is the penultimate step in the biosynthesis of riboflavin. Is able to use the non-natural R enantiomer of 3,4-dihydroxy-2-butanone 4-phosphate as a substrate, but with less efficiency than the natural S enantiomer. Cannot use unphosphorylated 3,4-dihydroxy-2-butanone, 3,4-dihydroxy-2-butanone 3-phosphate or diacetyl as substrates. This chain is 6,7-dimethyl-8-ribityllumazine synthase (ribH), found in Bacillus subtilis (strain 168).